Consider the following 247-residue polypeptide: tRNA uridine(34) hydroxylase (247 aa).

One can recognise a Rhodanese domain in the interval 124-218 (TKQNVIVIDT…YLEDTHNKNN (95 aa)). Residue Cys-178 is the Cysteine persulfide intermediate of the active site.

This sequence belongs to the TrhO family.

It carries out the reaction uridine(34) in tRNA + AH2 + O2 = 5-hydroxyuridine(34) in tRNA + A + H2O. Its function is as follows. Catalyzes oxygen-dependent 5-hydroxyuridine (ho5U) modification at position 34 in tRNAs. The polypeptide is tRNA uridine(34) hydroxylase (Rickettsia typhi (strain ATCC VR-144 / Wilmington)).